A 523-amino-acid polypeptide reads, in one-letter code: MKKFKRRLSLTLRGSQTIDESLSELAEQMTIEENSSKDNEPIVKNGRPPTSHSMHSFLHQYTGSFKKPPLRRPHSVIGGSLGSFMAMPRNGSRLDIVHENLKMGSDGESDQASGTSSDEVQSPTGVCLRNRIHRRISMEDLNKRLSLPADIRIPDGYLEKLQINSPPFDQPMSRRSRRASLSEIGFGKMETYIKLEKLGEGTYATVYKGRSKLTENLVALKEIRLEHEEGAPCTAIREVSLLKDLKHANIVTLHDIVHTDKSLTLVFEYLDKDLKQYMDDCGNIMSMHNVKLFLYQILRGLAYCHRRKVLHRDLKPQNLLINEKGELKLADFGLARAKSVPTKTYSNEVVTLWYRPPDVLLGSSEYSTQIDMWGVGCIFFEMASGRPLFPGSTVEDELHLIFRLLGTPSQETWPGISSNEEFKNYNFPKYKPQPLINHAPRLDSEGIELITKFLQYESKKRVSAEEAMKHVYFRSLGPRIHALPESVSIFSLKEIQLQKDPGFRNSSYPETGHGKNRRQSMLF.

A Phosphoserine modification is found at Ser-9. Residues Thr-30 to His-55 are disordered. Phosphoserine is present on residues Ser-80, Ser-92, and Ser-105. The disordered stretch occupies residues Met-103–Pro-123. Polar residues predominate over residues Asp-110–Pro-123. Phosphoserine is present on residues Ser-137, Ser-146, Ser-165, and Ser-180. The 282-residue stretch at Tyr-192 to Phe-473 folds into the Protein kinase domain. Residues Leu-198–Val-206 and Lys-221 each bind ATP. Asp-313 functions as the Proton acceptor in the catalytic mechanism. The tract at residues Pro-501 to Phe-523 is disordered. Positions Gly-514–Phe-523 are enriched in basic residues.

It belongs to the protein kinase superfamily. CMGC Ser/Thr protein kinase family. CDC2/CDKX subfamily. Found in a complex containing CABLES1, CDK16 and TDRD7. Interacts with TDRD7.

It carries out the reaction L-seryl-[protein] + ATP = O-phospho-L-seryl-[protein] + ADP + H(+). The catalysed reaction is L-threonyl-[protein] + ATP = O-phospho-L-threonyl-[protein] + ADP + H(+). May play a role in terminally differentiated neurons. Has a Ser/Thr-phosphorylating activity for histone H1. The protein is Cyclin-dependent kinase 17 (CDK17) of Homo sapiens (Human).